A 673-amino-acid chain; its full sequence is MAGKAAEERGLPKGATPQDTSGLQDRLFSSESDNSLYFTYSGQPNTLEVRDLNYQVDLASQVPWFEQLAQFKMPWTSPSCQNSCELGIQNLSFKVRSGQMLAIIGSSGCGRASLLDVITGRGHGGKIKSGQIWINGQPSSPQLVRKCVAHVRQHNQLLPNLTVRETLAFIAQMRLPRTFSQAQRDKRVEDVIAELRLRQCADTRVGNMYVRGLSGGERRRVSIGVQLLWNPGILILDEPTSGLDSFTAHNLVKTLSRLAKGNRLVLISLHQPRSDIFRLFDLVLLMTSGTPIYLGAAQHMVQYFTAIGYPCPRYSNPADFYVDLTSIDRRSREQELATREKAQSLAALFLEKVRDLDDFLWKAETKDLDEDTCVESSVTPLDTNCLPSPTKMPGAVQQFTTLIRRQISNDFRDLPTLLIHGAEACLMSMTIGFLYFGHGSIQLSFMDTAALLFMIGALIPFNVILDVISKCYSERAMLYYELEDGLYTTGPYFFAKILGELPEHCAYIIIYGMPTYWLANLRPGLQPFLLHFLLVWLVVFCCRIMALAAAALLPTFHMASFFSNALYNSFYLAGGFMINLSSLWTVPAWISKVSFLRWCFEGLMKIQFSRRTYKMPLGNLTIAVSGDKILSVMELDSYPLYAIYLIVIGLSGGFMVLYYVSLRFIKQKPSQDW.

Residues 1–11 show a composition bias toward basic and acidic residues; sequence MAGKAAEERGL. The tract at residues 1–25 is disordered; it reads MAGKAAEERGLPKGATPQDTSGLQD. At 1–416 the chain is on the cytoplasmic side; sequence MAGKAAEERG…ISNDFRDLPT (416 aa). The region spanning 47 to 313 is the ABC transporter domain; that stretch reads LEVRDLNYQV…FTAIGYPCPR (267 aa). An ABC transmembrane type-2 domain is found at 411–665; the sequence is FRDLPTLLIH…VLYYVSLRFI (255 aa). Residues 417–437 traverse the membrane as a helical segment; sequence LLIHGAEACLMSMTIGFLYFG. Over 438-447 the chain is Extracellular; sequence HGSIQLSFMD. Residues 448-468 form a helical membrane-spanning segment; the sequence is TAALLFMIGALIPFNVILDVI. Over 469–497 the chain is Cytoplasmic; the sequence is SKCYSERAMLYYELEDGLYTTGPYFFAKI. Residues 498 to 518 form a helical membrane-spanning segment; the sequence is LGELPEHCAYIIIYGMPTYWL. The Extracellular segment spans residues 519-527; that stretch reads ANLRPGLQP. The helical transmembrane segment at 528 to 548 threads the bilayer; the sequence is FLLHFLLVWLVVFCCRIMALA. At 549-555 the chain is on the cytoplasmic side; sequence AAALLPT. Residues 556–576 traverse the membrane as a helical segment; it reads FHMASFFSNALYNSFYLAGGF. Residues 577–639 are Extracellular-facing; that stretch reads MINLSSLWTV…LSVMELDSYP (63 aa). Residue N619 is glycosylated (N-linked (GlcNAc...) asparagine). The chain crosses the membrane as a helical span at residues 640-660; sequence LYAIYLIVIGLSGGFMVLYYV. Over 661–673 the chain is Cytoplasmic; that stretch reads SLRFIKQKPSQDW.

This sequence belongs to the ABC transporter superfamily. ABCG family. Eye pigment precursor importer (TC 3.A.1.204) subfamily. As to quaternary structure, heterodimer with ABCG8. Mg(2+) serves as cofactor. Post-translationally, N-glycosylated. As to expression, predominantly expressed in the liver. Low expression levels in the small intestine and colon. Very low levels in other tissues, including brain, heart and spleen.

It is found in the cell membrane. The protein localises to the apical cell membrane. It catalyses the reaction cholesterol(in) + ATP + H2O = cholesterol(out) + ADP + phosphate + H(+). The catalysed reaction is sitosterol(in) + ATP + H2O = sitosterol(out) + ADP + phosphate + H(+). Its activity is regulated as follows. The ATPase activity of the heterodimer is stimulated by cholate. Taurocholate, glycocholate, taurochenodeoxycholate, glycochenodeoxycholate and taurodeoxycholate also stimulate ATPase activity, but to a lower degree. Glycodeoxycholate has no significant effect on ATPase activity. ATPase activity is inhibited by vanadate and by berillium fluoride. In terms of biological role, ABCG5 and ABCG8 form an obligate heterodimer that mediates Mg(2+)- and ATP-dependent sterol transport across the cell membrane. Plays an essential role in the selective transport of the dietary cholesterol in and out of the enterocytes and in the selective sterol excretion by the liver into bile. Required for normal sterol homeostasis. The heterodimer with ABCG5 has ATPase activity. The sequence is that of ATP-binding cassette sub-family G member 8 from Homo sapiens (Human).